A 360-amino-acid polypeptide reads, in one-letter code: Peptide chain release factor 1 (360 aa).

Gln-236 bears the N5-methylglutamine mark. Residues 288 to 308 (QDEQDAERKSTIGTGDRSERI) are disordered. Over residues 293 to 308 (AERKSTIGTGDRSERI) the composition is skewed to basic and acidic residues.

It belongs to the prokaryotic/mitochondrial release factor family. In terms of processing, methylated by PrmC. Methylation increases the termination efficiency of RF1.

The protein localises to the cytoplasm. Its function is as follows. Peptide chain release factor 1 directs the termination of translation in response to the peptide chain termination codons UAG and UAA. This Streptococcus equi subsp. equi (strain 4047) protein is Peptide chain release factor 1.